Here is an 839-residue protein sequence, read N- to C-terminus: Toll-like receptor 4 (839 aa).

An N-terminal signal peptide occupies residues 1–23; sequence MMSASRLAGTLIPAMAFLSCVRP. Over 24–631 the chain is Extracellular; the sequence is ESWEPCVEVV…SLNITCQMNK (608 aa). A disulfide bridge connects residues Cys29 and Cys40. A glycan (N-linked (GlcNAc...) asparagine) is linked at Asn35. LRR repeat units lie at residues 55–76, 79–100, 103–124, 127–148, and 151–172; these read STKN…SFFS, ELQV…AYQS, HLST…AFSG, SLQK…PIGH, and TLKE…EYFS. N-linked (GlcNAc...) asparagine glycosylation is present at Asn173. 3 LRR repeats span residues 176–199, 205–225, and 227–247; these read NLEH…RVLH, NLSL…AFKE, and RLHK…KTCI. Asn205 carries an N-linked (GlcNAc...) asparagine glycan. The cysteines at positions 281 and 306 are disulfide-linked. N-linked (GlcNAc...) asparagine glycosylation is found at Asn282 and Asn309. 10 LRR repeats span residues 331–351, 352–373, 374–394, 400–422, 423–444, 448–456, 472–495, 497–518, 521–542, and 545–565; these read GWQH…LKLK, SLKR…VDLP, SLEF…CSQS, SLKY…LGLE, QLEH…SVFL, NLIYLDISH, SLEV…FTEL, NLTF…AFNS, SLQV…PYKC, and SLQV…QELQ. Cys390 and Cys391 are joined by a disulfide. Asn497 and Asn526 each carry an N-linked (GlcNAc...) asparagine glycan. Residue Asn575 is glycosylated (N-linked (GlcNAc...) asparagine). The LRRCT domain maps to 579 to 629; sequence NDFACTCEHQSFLQWIKDQRQLLVEVERMECATPSDKQGMPVLSLNITCQM. 2 disulfides stabilise this stretch: Cys583–Cys609 and Cys585–Cys627. N-linked (GlcNAc...) asparagine glycosylation is found at Asn624 and Asn630. A helical membrane pass occupies residues 632–652; the sequence is TIIGVSVLSVLVVSVVAVLVY. The Cytoplasmic portion of the chain corresponds to 653 to 839; it reads KFYFHLMLLA…GCNWQEATSI (187 aa). Positions 672-815 constitute a TIR domain; sequence NIYDAFVIYS…IFWRRLRKAL (144 aa).

The protein belongs to the Toll-like receptor family. Belongs to the lipopolysaccharide (LPS) receptor, a multi-protein complex containing at least CD14, LY96 and TLR4. Binding to bacterial LPS leads to homodimerization. Interacts with LY96 via the extracellular domain. Interacts with MYD88. Interacts (via TIR domains) with TIRAP. Interacts with TICAM2. Interacts with NOX4. Interacts with CNPY3. Interacts with HSP90B1. The interaction with both CNPY3 and HSP90B1 is required for proper folding in the endoplasmic reticulum. Interacts with MAP3K21; this interaction leads to negative regulation of TLR4 signaling. Interacts with CD36, following CD36 stimulation by oxLDL or amyloid-beta 42, and forms a heterodimer with TLR6. The trimeric complex is internalized and triggers inflammatory response. LYN kinase activity facilitates TLR4-TLR6 heterodimerization and signal initiation. Interacts with TICAM1 in response to LPS in a WDFY1-dependent manner. Interacts with WDFY1 in response to LPS. Interacts with SMPDL3B. Interacts with CEACAM1; upon lipopolysaccharide stimulation, forms a complex including TLR4 and the phosphorylated form of SYK and CEACAM1, which in turn, recruits PTPN6 that dephosphorylates SYK, reducing the production of reactive oxygen species (ROS) and lysosome disruption, which in turn, reduces the activity of the inflammasome. Interacts with RFTN1; the interaction occurs in response to lipopolysaccharide stimulation. Interacts with SCIMP; the interaction occurs in response to lipopolysaccharide stimulation and is enhanced by phosphorylation of SCIMP by LYN. This interaction facilitates the phosphorylation of TLR4 by LYN which elicits a selective cytokine response in macrophages. Interacts with TRAF3IP3. Interacts with TREM1; this interaction enhances TLR4-mediated inflammatory response. Interacts with ZG16B/PAUF. Interacts with CD82; this interaction inhibits TLR4-mediated signaling pathway. Interacts with neutrophil recruitment protein from Aedes aegypti saliva; the interaction probably promotes activation of canonical NF-kappa-B signaling in skin-resident macrophages and subsequent expression of neutrophil chemoattractants. In terms of assembly, (Microbial infection) In case of infection, interacts with uropathogenic E.coli protein TcpC. As to quaternary structure, (Microbial infection) In case of infection, interacts with B.melitensis protein TcpB; TcpB abolishes the TLR4-TIRAP interaction in vitro. (Microbial infection) Interacts with ebolavirus protein GP; this interaction leads to the production of proinflammatory cytokines and suppressor of cytokine signaling 1/SOCS1. Post-translationally, N-Glycosylation of Asn-526 and Asn-575 by STT3A-containing OST-A complex is necessary for the expression of TLR4 on the cell surface and the LPS-response. Likewise, mutants lacking two or more of the other N-glycosylation sites were deficient in interaction with LPS. Phosphorylated on tyrosine residues by LYN after binding lipopolysaccharide. In terms of processing, ubiquitinated by RNF128 via 'Lys-28'-linked polyubiquitin chains, leading to proteasomal degradation. In terms of tissue distribution, highly expressed in placenta, spleen and peripheral blood leukocytes. Detected in monocytes, macrophages, dendritic cells and several types of T-cells. Expressed in pancreatic cancer cells but not in normal pancreatic cells (at protein level).

It is found in the cell membrane. The protein resides in the early endosome. The protein localises to the cell projection. It localises to the ruffle. Transmembrane receptor that functions as a pattern recognition receptor recognizing pathogen- and damage-associated molecular patterns (PAMPs and DAMPs) to induce innate immune responses via downstream signaling pathways. At the plasma membrane, cooperates with LY96 to mediate the innate immune response to bacterial lipopolysaccharide (LPS). Also involved in LPS-independent inflammatory responses triggered by free fatty acids, such as palmitate, and Ni(2+). Mechanistically, acts via MYD88, TIRAP and TRAF6, leading to NF-kappa-B activation, cytokine secretion and the inflammatory response. Alternatively, CD14-mediated TLR4 internalization via endocytosis is associated with the initiation of a MYD88-independent signaling via the TICAM1-TBK1-IRF3 axis leading to type I interferon production. In addition to the secretion of proinflammatory cytokines, initiates the activation of NLRP3 inflammasome and formation of a positive feedback loop between autophagy and NF-kappa-B signaling cascade. In complex with TLR6, promotes inflammation in monocytes/macrophages by associating with TLR6 and the receptor CD86. Upon ligand binding, such as oxLDL or amyloid-beta 42, the TLR4:TLR6 complex is internalized and triggers inflammatory response, leading to NF-kappa-B-dependent production of CXCL1, CXCL2 and CCL9 cytokines, via MYD88 signaling pathway, and CCL5 cytokine, via TICAM1 signaling pathway. In myeloid dendritic cells, vesicular stomatitis virus glycoprotein G but not LPS promotes the activation of IRF7, leading to type I IFN production in a CD14-dependent manner. Required for the migration-promoting effects of ZG16B/PAUF on pancreatic cancer cells. The polypeptide is Toll-like receptor 4 (TLR4) (Homo sapiens (Human)).